The sequence spans 218 residues: N-(5'-phosphoribosyl)anthranilate isomerase (218 aa).

The protein belongs to the TrpF family.

It catalyses the reaction N-(5-phospho-beta-D-ribosyl)anthranilate = 1-(2-carboxyphenylamino)-1-deoxy-D-ribulose 5-phosphate. Its pathway is amino-acid biosynthesis; L-tryptophan biosynthesis; L-tryptophan from chorismate: step 3/5. This Halobacterium salinarum (strain ATCC 29341 / DSM 671 / R1) protein is N-(5'-phosphoribosyl)anthranilate isomerase.